A 301-amino-acid chain; its full sequence is Mitochondrial carnitine/acylcarnitine carrier protein (301 aa).

Alanine 2 carries the post-translational modification N-acetylalanine. The Cytoplasmic segment spans residues 2 to 12 (AEEPKPISPLK). 3 Solcar repeats span residues 8 to 99 (ISPL…GKRL), 108 to 196 (LTYP…LKNL), and 207 to 293 (LSVP…PMKI). Residues 13 to 31 (NLLAGGFGGVCLVFVGHPL) form a helical membrane-spanning segment. Topologically, residues 32-73 (DTVKVRLQTQPPSLPGQPPMYSGTIDCFRKTLFREGITGLYR) are mitochondrial matrix. Residues 74–93 (GMAAPIIGVTPMFAVCFFGF) traverse the membrane as a helical segment. The Cytoplasmic portion of the chain corresponds to 94 to 112 (GLGKRLQQKSPEDELTYPQ). The chain crosses the membrane as a helical span at residues 113–131 (LFTAGMLSGVFTTGIMTPG). The Mitochondrial matrix segment spans residues 132–170 (ERIKCLLQIQASSGKNKYSGTLDCAKKLYQEFGIRGFYK). Residues lysine 148 and lysine 157 each carry the N6-acetyllysine modification. Lysine 170 is modified (N6-acetyllysine; alternate). Lysine 170 is modified (N6-succinyllysine; alternate). A helical transmembrane segment spans residues 171–190 (GTALTLMRDVPASGMYFMTY). Over 191-211 (EWLKNLFTPQGKSVHDLSVPR) the chain is Cytoplasmic. The chain crosses the membrane as a helical span at residues 212-230 (VLVAGGFRGIFNWVVAIPP). Residues 231–267 (DVLKSRFQTAPPGKYPNGFRDVLRELIREEGVTSLYK) are Mitochondrial matrix-facing. A helical transmembrane segment spans residues 268-287 (GFNAVMIRAFPANAACFLGF). Residues 288 to 301 (EIPMKILNWIAPNL) are Cytoplasmic-facing.

This sequence belongs to the mitochondrial carrier (TC 2.A.29) family. The N-terminus is blocked.

It localises to the mitochondrion inner membrane. It catalyses the reaction O-acetyl-(R)-carnitine(in) + (R)-carnitine(out) = O-acetyl-(R)-carnitine(out) + (R)-carnitine(in). The catalysed reaction is an O-acyl-(R)-carnitine(in) + (R)-carnitine(out) = an O-acyl-(R)-carnitine(out) + (R)-carnitine(in). It carries out the reaction O-propanoyl-(R)-carnitine(in) + (R)-carnitine(out) = O-propanoyl-(R)-carnitine(out) + (R)-carnitine(in). The enzyme catalyses O-hexadecanoyl-(R)-carnitine(in) + (R)-carnitine(out) = O-hexadecanoyl-(R)-carnitine(out) + (R)-carnitine(in). It catalyses the reaction O-octanoyl-(R)-carnitine(in) + (R)-carnitine(out) = O-octanoyl-(R)-carnitine(out) + (R)-carnitine(in). The catalysed reaction is (R)-carnitine(in) = (R)-carnitine(out). In terms of biological role, mediates the electroneutral exchange of acylcarnitines (O-acyl-(R)-carnitine or L-acylcarnitine) of different acyl chain lengths (ranging from O-acetyl-(R)-carnitine to long-chain O-acyl-(R)-carnitines) with free carnitine ((R)-carnitine or L-carnitine) across the mitochondrial inner membrane, via a ping-pong mechanism. Key player in the mitochondrial oxidation pathway, it translocates the fatty acids in the form of acylcarnitines into the mitochondrial matrix, where the carnitine palmitoyltransferase 2 (CPT-2) activates them to undergo fatty acid beta-oxidation. Catalyzes the unidirectional transport (uniport) of carnitine at lower rates than the antiport (exchange). This Rattus norvegicus (Rat) protein is Mitochondrial carnitine/acylcarnitine carrier protein.